The following is a 130-amino-acid chain: Protachykinin-1 (130 aa).

The signal sequence occupies residues 1 to 19 (MKILVAVAVIFFISTQLSA). The propeptide occupies 20-56 (EEIGANDDFNYWSDWSDSDQIKEEMPEPFEHLLQRIA). Residues Met-68 and Met-107 each carry the methionine amide modification.

It belongs to the tachykinin family. In terms of processing, the substance P form is cleaved at Pro-59 by the prolyl endopeptidase FAP (seprase) activity (in vitro). Substance P is also cleaved and degraded by Angiotensin-converting enzyme (ACE) and neprilysin (MME).

The protein resides in the secreted. In terms of biological role, tachykinins are active peptides which excite neurons, evoke behavioral responses, are potent vasodilators and secretagogues, and contract (directly or indirectly) many smooth muscles. This Bos taurus (Bovine) protein is Protachykinin-1 (TAC1).